Consider the following 386-residue polypeptide: Homoserine O-succinyltransferase (386 aa).

The AB hydrolase-1 domain maps to 49-358 (NAILICHALS…DAEQGHDSFL (310 aa)). Residue S156 is the Nucleophile of the active site. Substrate is bound at residue R226. Active-site residues include D321 and H354. D355 is a substrate binding site.

It belongs to the AB hydrolase superfamily. MetX family. In terms of assembly, homodimer.

The protein resides in the cytoplasm. The enzyme catalyses L-homoserine + succinyl-CoA = O-succinyl-L-homoserine + CoA. It participates in amino-acid biosynthesis; L-methionine biosynthesis via de novo pathway; O-succinyl-L-homoserine from L-homoserine: step 1/1. In terms of biological role, transfers a succinyl group from succinyl-CoA to L-homoserine, forming succinyl-L-homoserine. This chain is Homoserine O-succinyltransferase, found in Acinetobacter baumannii (strain SDF).